A 428-amino-acid chain; its full sequence is uncharacterized protein (428 aa).

Disordered stretches follow at residues 1 to 25 (MRDN…PTRT), 157 to 219 (DTAK…TEQV), and 247 to 271 (DFGT…PWRP). The segment covering 12 to 22 (GSESQQTTYDP) has biased composition (polar residues). Residues 157–171 (DTAKSNEKLQGDESK) show a composition bias toward basic and acidic residues. A compositionally biased stretch (low complexity) spans 172 to 186 (SSNGSSSTSTTTQRG). Positions 206-217 (GSQGNSGEQGTE) are enriched in polar residues.

The protein belongs to the adhesin P1 family.

This is an uncharacterized protein from Mycoplasma pneumoniae (strain ATCC 29342 / M129 / Subtype 1) (Mycoplasmoides pneumoniae).